Here is a 294-residue protein sequence, read N- to C-terminus: Pantothenate synthetase 3 (294 aa).

Position 31–38 (31–38 (MGALHEGH)) interacts with ATP. Histidine 38 serves as the catalytic Proton donor. Glutamine 62 lines the (R)-pantoate pocket. Position 62 (glutamine 62) interacts with beta-alanine. 154–157 (GEKD) provides a ligand contact to ATP. A (R)-pantoate-binding site is contributed by glutamine 160. 191–194 (LSSR) is an ATP binding site.

This sequence belongs to the pantothenate synthetase family. As to quaternary structure, homodimer.

The protein resides in the cytoplasm. It catalyses the reaction (R)-pantoate + beta-alanine + ATP = (R)-pantothenate + AMP + diphosphate + H(+). The protein operates within cofactor biosynthesis; (R)-pantothenate biosynthesis; (R)-pantothenate from (R)-pantoate and beta-alanine: step 1/1. In terms of biological role, catalyzes the condensation of pantoate with beta-alanine in an ATP-dependent reaction via a pantoyl-adenylate intermediate. This is Pantothenate synthetase 3 from Frankia alni (strain DSM 45986 / CECT 9034 / ACN14a).